We begin with the raw amino-acid sequence, 139 residues long: Putative pre-16S rRNA nuclease (139 aa).

Belongs to the YqgF nuclease family.

The protein localises to the cytoplasm. Could be a nuclease involved in processing of the 5'-end of pre-16S rRNA. In Streptococcus pyogenes serotype M2 (strain MGAS10270), this protein is Putative pre-16S rRNA nuclease.